The sequence spans 277 residues: Undecaprenyl-diphosphatase (277 aa).

5 consecutive transmembrane segments (helical) span residues 85–105, 109–129, 188–208, 218–238, and 256–276; these read VNIV…AGAI, LFAP…ILWV, ATEF…VYSV, ADIP…FLCV, and YRIG…VVWA.

Belongs to the UppP family.

The protein resides in the cell inner membrane. It catalyses the reaction di-trans,octa-cis-undecaprenyl diphosphate + H2O = di-trans,octa-cis-undecaprenyl phosphate + phosphate + H(+). Catalyzes the dephosphorylation of undecaprenyl diphosphate (UPP). Confers resistance to bacitracin. This chain is Undecaprenyl-diphosphatase, found in Herminiimonas arsenicoxydans.